The sequence spans 369 residues: Phosphoribosyl pyrophosphate synthase-associated protein 2 (369 aa).

Met-1 carries the N-acetylmethionine modification. A Phosphothreonine modification is found at Thr-5. Ser-219, Ser-227, and Ser-233 each carry phosphoserine.

The protein belongs to the ribose-phosphate pyrophosphokinase family. Binds to PRPS1 and PRPS2.

Seems to play a negative regulatory role in 5-phosphoribose 1-diphosphate synthesis. The sequence is that of Phosphoribosyl pyrophosphate synthase-associated protein 2 (PRPSAP2) from Pongo abelii (Sumatran orangutan).